The primary structure comprises 406 residues: Phosphorylase b kinase gamma catalytic chain, liver/testis isoform (406 aa).

Residues 24–291 enclose the Protein kinase domain; the sequence is YDPKDIIGRG…AEQALQHPFF (268 aa). ATP contacts are provided by residues 30-38 and K53; that span reads IGRGVSSVV. D153 acts as the Proton acceptor in catalysis. The tract at residues 306-330 is calmodulin-binding (domain-N); the sequence is QRFRVAVWTILAAGRVALSSHRLRP. The calmodulin-binding (domain-C) stretch occupies residues 346 to 370; sequence VRRLIDNCAFRLYGHWVKKGEQQNR.

Belongs to the protein kinase superfamily. CAMK Ser/Thr protein kinase family. As to quaternary structure, hexadecamer of 4 heterotetramers, each composed of alpha, beta, gamma, and delta subunits. Alpha (PHKA1 or PHKA2) and beta (PHKB) are regulatory subunits, gamma (PHKG1 or PHKG2) is the catalytic subunit, and delta is calmodulin.

The catalysed reaction is 2 ATP + phosphorylase b = 2 ADP + phosphorylase a.. Its function is as follows. Catalytic subunit of the phosphorylase b kinase (PHK), which mediates the neural and hormonal regulation of glycogen breakdown (glycogenolysis) by phosphorylating and thereby activating glycogen phosphorylase. May regulate glycogeneolysis in the testis. In vitro, phosphorylates PYGM. In Mus musculus (Mouse), this protein is Phosphorylase b kinase gamma catalytic chain, liver/testis isoform (Phkg2).